A 216-amino-acid polypeptide reads, in one-letter code: Large ribosomal subunit protein uL4 (216 aa).

Positions 47 to 77 (THKVKGMGEVSGTTKKPYRQKGTGNARQGSL) are disordered.

Belongs to the universal ribosomal protein uL4 family. In terms of assembly, part of the 50S ribosomal subunit.

In terms of biological role, one of the primary rRNA binding proteins, this protein initially binds near the 5'-end of the 23S rRNA. It is important during the early stages of 50S assembly. It makes multiple contacts with different domains of the 23S rRNA in the assembled 50S subunit and ribosome. Functionally, forms part of the polypeptide exit tunnel. In Acidiphilium cryptum (strain JF-5), this protein is Large ribosomal subunit protein uL4.